The chain runs to 436 residues: Drebrin-like protein (436 aa).

In terms of domain architecture, ADF-H spans 2 to 133 (AVNLSRNGPA…EPECIMEKVA (132 aa)). Thr26 is modified (phosphothreonine). Ser160 carries the post-translational modification Phosphoserine. Position 176 is an N6-acetyllysine (Lys176). Residues 178 to 232 (NFWAKAEKEEENRRLEEKRRAEEEKQRLEEERRERELQEAARREQRYQEQHRSAG) adopt a coiled-coil conformation. Composition is skewed to basic and acidic residues over residues 185-229 (KEEE…EQHR) and 264-275 (HPREIFKQKERA). A disordered region spans residues 185 to 371 (KEEENRRLEE…GSGHIDNYMQ (187 aa)). A compositionally biased stretch (polar residues) spans 276–286 (MSTTSVSSSQP). Ser277, Ser280, Ser283, and Ser291 each carry phosphoserine. At Lys296 the chain carries N6-acetyllysine. Thr299 carries the post-translational modification Phosphothreonine. Position 311 is a phosphoserine (Ser311). A phosphotyrosine mark is found at Tyr340 and Tyr350. The SH3 domain occupies 377–436 (GQGLCARALYDYQAADDTEISFDPENLITGIEVIDEGWWRGYGPDGHFGMFPANYVELIE).

It belongs to the ABP1 family. As to quaternary structure, interacts with FGD1, MAP4K1 and PRAM1. Interacts with ANKRD54. Interacts with WASL and WIPF1. Interacts with SHANK2 and SHANK3. Interacts with both COBL and PACSIN1. Interacts with DNM1 and SYN1. In terms of tissue distribution, detected in brain (at protein level). Widely expressed in brain with highest levels in hippocampus and cerebral cortex. Located primarily in dendrites and, in moderate amounts, in cell bodies. Isoform 1 and isoform 3 are the predominant isoforms in brain.

It is found in the cytoplasm. It localises to the cytoskeleton. Its subcellular location is the cell projection. The protein resides in the lamellipodium. The protein localises to the ruffle. It is found in the cell cortex. It localises to the cytosol. Its subcellular location is the cell membrane. The protein resides in the synapse. The protein localises to the perikaryon. It is found in the neuron projection. It localises to the dendrite. Its subcellular location is the postsynaptic density. The protein resides in the golgi apparatus membrane. The protein localises to the cytoplasmic vesicle. It is found in the clathrin-coated vesicle membrane. It localises to the podosome. Its subcellular location is the early endosome. Its function is as follows. Adapter protein that binds F-actin and DNM1, and thereby plays a role in receptor-mediated endocytosis. Required for the formation of organized podosome rosettes. May act as a common effector of antigen receptor-signaling pathways in leukocytes. Acts as a key component of the immunological synapse that regulates T-cell activation by bridging TCRs and the actin cytoskeleton to gene activation and endocytic processes. Plays a role in the reorganization of the actin cytoskeleton, formation of cell projections, such as neurites, in neuron morphogenesis and synapse formation via its interaction with WASL and COBL. Does not bind G-actin and promote actin polymerization by itself. The chain is Drebrin-like protein from Rattus norvegicus (Rat).